Reading from the N-terminus, the 128-residue chain is Probable 4-amino-4-deoxy-L-arabinose-phosphoundecaprenol flippase subunit ArnF (128 aa).

The Cytoplasmic portion of the chain corresponds to 1 to 2 (MG). A helical membrane pass occupies residues 3–23 (LMWGLFSVIIASVAQLSLGFA). The Periplasmic segment spans residues 24–35 (ASHLPPMTHLWD). The chain crosses the membrane as a helical span at residues 36–56 (FIAALLAFGLDARILLLGLLG). At 57 to 76 (YLLSVFCWYKTLHKLALSKA) the chain is on the cytoplasmic side. A helical membrane pass occupies residues 77-97 (YALLSMSYVLVWIASMVLPGW). Residues 98–100 (EGT) lie on the Periplasmic side of the membrane. The chain crosses the membrane as a helical span at residues 101–121 (FSLKALLGVACIMSGLMLIFL). Residues 122–128 (PTTKQRY) lie on the Cytoplasmic side of the membrane.

Belongs to the ArnF family. In terms of assembly, heterodimer of ArnE and ArnF.

It is found in the cell inner membrane. Its pathway is bacterial outer membrane biogenesis; lipopolysaccharide biosynthesis. Functionally, translocates 4-amino-4-deoxy-L-arabinose-phosphoundecaprenol (alpha-L-Ara4N-phosphoundecaprenol) from the cytoplasmic to the periplasmic side of the inner membrane. The polypeptide is Probable 4-amino-4-deoxy-L-arabinose-phosphoundecaprenol flippase subunit ArnF (Shigella sonnei (strain Ss046)).